Reading from the N-terminus, the 405-residue chain is L-rhamnonate dehydratase (405 aa).

2 residues coordinate substrate: histidine 33 and arginine 59. Mg(2+) is bound by residues aspartate 226, glutamate 252, and glutamate 280. Histidine 329 acts as the Proton acceptor in catalysis. Glutamate 349 contacts substrate.

This sequence belongs to the mandelate racemase/muconate lactonizing enzyme family. RhamD subfamily. As to quaternary structure, homooctamer; tetramer of dimers. Requires Mg(2+) as cofactor.

It catalyses the reaction L-rhamnonate = 2-dehydro-3-deoxy-L-rhamnonate + H2O. Its function is as follows. Catalyzes the dehydration of L-rhamnonate to 2-keto-3-deoxy-L-rhamnonate (KDR). This chain is L-rhamnonate dehydratase, found in Escherichia coli O6:H1 (strain CFT073 / ATCC 700928 / UPEC).